Here is a 405-residue protein sequence, read N- to C-terminus: Cytochrome P450 109 (405 aa).

Cys351 serves as a coordination point for heme.

This sequence belongs to the cytochrome P450 family. The cofactor is heme.

Functionally, cytochromes P450 are a group of heme-thiolate monooxygenases. They oxidize a variety of structurally unrelated compounds, including steroids, fatty acids, and xenobiotics. This Bacillus spizizenii (strain ATCC 23059 / NRRL B-14472 / W23) (Bacillus subtilis subsp. spizizenii) protein is Cytochrome P450 109 (cyp109).